Here is a 185-residue protein sequence, read N- to C-terminus: Elongation factor P (185 aa).

Belongs to the elongation factor P family.

The protein localises to the cytoplasm. It participates in protein biosynthesis; polypeptide chain elongation. In terms of biological role, involved in peptide bond synthesis. Stimulates efficient translation and peptide-bond synthesis on native or reconstituted 70S ribosomes in vitro. Probably functions indirectly by altering the affinity of the ribosome for aminoacyl-tRNA, thus increasing their reactivity as acceptors for peptidyl transferase. The protein is Elongation factor P of Bordetella petrii (strain ATCC BAA-461 / DSM 12804 / CCUG 43448).